The sequence spans 293 residues: Methylsterol monooxygenase 1 (293 aa).

2 helical membrane passes run 55-75 and 100-120; these read LIVH…FQFI and KILF…YYFT. The Fatty acid hydroxylase domain maps to 144 to 274; sequence GCAVIEDTWH…FTWWDKLFGT (131 aa). The Histidine box-1 signature appears at 157–161; sequence HRLLH. Residues 170 to 174 carry the Histidine box-2 motif; it reads HKVHH. The chain crosses the membrane as a helical span at residues 199 to 219; that stretch reads FFIGIVLLCDHVILLWAWVTI. The Histidine box-3 motif lies at 249–255; it reads HHDFHHM.

The protein belongs to the sterol desaturase family. It depends on Fe cation as a cofactor. Post-translationally, ubiquitinated by MARCHF6, leading to proteasomal degradation.

Its subcellular location is the endoplasmic reticulum membrane. The enzyme catalyses 4,4-dimethyl-5alpha-cholest-7-en-3beta-ol + 6 Fe(II)-[cytochrome b5] + 3 O2 + 5 H(+) = 4alpha-carboxy-4beta-methyl-5alpha-cholest-7-ene-3beta-ol + 6 Fe(III)-[cytochrome b5] + 4 H2O. It catalyses the reaction 4,4-dimethyl-5alpha-cholesta-8,24-dien-3beta-ol + 6 Fe(II)-[cytochrome b5] + 3 O2 + 5 H(+) = 4beta-methylzymosterol-4alpha-carboxylate + 6 Fe(III)-[cytochrome b5] + 4 H2O. The catalysed reaction is 4alpha-methylzymosterol + 6 Fe(II)-[cytochrome b5] + 3 O2 + 5 H(+) = 4alpha-carboxyzymosterol + 6 Fe(III)-[cytochrome b5] + 4 H2O. It carries out the reaction 4alpha-methyl-5alpha-cholest-7-en-3beta-ol + 6 Fe(II)-[cytochrome b5] + 3 O2 + 5 H(+) = 4alpha-carboxy-5alpha-cholest-7-en-3beta-ol + 6 Fe(III)-[cytochrome b5] + 4 H2O. The enzyme catalyses 4,4-dimethyl-5alpha-cholest-8-en-3beta-ol + 6 Fe(II)-[cytochrome b5] + 3 O2 + 5 H(+) = 4alpha-carboxy-4beta-methyl-5alpha-cholest-8-en-3beta-ol + 6 Fe(III)-[cytochrome b5] + 4 H2O. It catalyses the reaction 4alpha-methyl-5alpha-cholest-8-en-3beta-ol + 6 Fe(II)-[cytochrome b5] + 3 O2 + 5 H(+) = 4alpha-carboxy-5alpha-cholest-8-ene-3beta-ol + 6 Fe(III)-[cytochrome b5] + 4 H2O. Its pathway is steroid biosynthesis; zymosterol biosynthesis; zymosterol from lanosterol: step 3/6. The protein operates within steroid biosynthesis; cholesterol biosynthesis. Functionally, catalyzes the three-step monooxygenation required for the demethylation of 4,4-dimethyl and 4alpha-methylsterols, which can be subsequently metabolized to cholesterol. This Mus musculus (Mouse) protein is Methylsterol monooxygenase 1 (Msmo1).